The following is a 212-amino-acid chain: MRGKFISLEGGEGSGKTTAIHFIRQWLDDHKIPYIMTREPGGTPLAEEIRQLVLTPRDESVNDVTELLLVFAARAQHLAEKIQPALEKGTWVISDRFLDSSYVYQGKARGGDIAMLDQLANWVVGDNKPDATLVLDVPVELGQERVVQRQHQDRLDKESFAFHQKVRDGFLERAEADPKRVKIVDASQSLESVKSQIEEQLAKLNEAWAGDC.

10–17 (GGEGSGKT) contacts ATP.

Belongs to the thymidylate kinase family.

The enzyme catalyses dTMP + ATP = dTDP + ADP. Its function is as follows. Phosphorylation of dTMP to form dTDP in both de novo and salvage pathways of dTTP synthesis. The protein is Thymidylate kinase of Marinomonas sp. (strain MWYL1).